The primary structure comprises 86 residues: Large ribosomal subunit protein bL27c (86 aa).

The disordered stretch occupies residues 1–20 (MAHKKGSGSTRNGRDSNAQR). The span at 7 to 19 (SGSTRNGRDSNAQ) shows a compositional bias: polar residues.

It belongs to the bacterial ribosomal protein bL27 family.

The protein localises to the plastid. It is found in the chloroplast. The polypeptide is Large ribosomal subunit protein bL27c (rpl27) (Guillardia theta (Cryptophyte)).